The following is a 150-amino-acid chain: Snaclec 7 (150 aa).

Positions 1-23 (MGRFISISFGLLVVFLSLSGTGA) are cleaved as a signal peptide. 3 cysteine pairs are disulfide-bonded: Cys27-Cys38, Cys55-Cys144, and Cys121-Cys136. The C-type lectin domain occupies 34-145 (YEGYCYKVFN…CNDPRYFVCK (112 aa)).

Belongs to the snaclec family. In terms of assembly, heterodimer; disulfide-linked.

The protein localises to the secreted. In terms of biological role, interferes with one step of hemostasis (modulation of platelet aggregation, or coagulation cascade, for example). This Daboia siamensis (Eastern Russel's viper) protein is Snaclec 7.